Here is a 389-residue protein sequence, read N- to C-terminus: MRYITSGESHGKQLTTIIEGLPSQLPITAEDINASLRRRQGGHGRGKRMQIEKDTVDIVSGVRHGYTLGSPLSLVIRNDDFKHWTDIMGEEPMEDPSKMRRVVTKPRPGHADLNGALKYGHRDMRNVLERSSARETAARVAAGAVAKKLLKELGIEVSGYVKEIAGIEASDLPELNAQERADKANQSPVMVLDATVEEQMTNAIDQAKKEGDSIGGVCEVYVEGMPAGVGSYVHYDRKLDSRLAGSVVSINAFKGVEFGIGFEAAKRNGSEVHDEIAWDETHGYYRTTNRLGGFEGGMTTGMPIIVRGVMKPIPTLMKRPLTSVDIETKEPFKATVERSDACAVPAASVVMEHVVAFELAKALTEQFSSDQLPQLKKAIDDYREEIRCF.

NADP(+)-binding residues include R39 and R45. FMN contacts are provided by residues 130-132 (RSS), 251-252 (NA), G296, 311-315 (KPIPT), and R338.

The protein belongs to the chorismate synthase family. As to quaternary structure, homotetramer. FMNH2 is required as a cofactor.

The enzyme catalyses 5-O-(1-carboxyvinyl)-3-phosphoshikimate = chorismate + phosphate. Its pathway is metabolic intermediate biosynthesis; chorismate biosynthesis; chorismate from D-erythrose 4-phosphate and phosphoenolpyruvate: step 7/7. Functionally, catalyzes the anti-1,4-elimination of the C-3 phosphate and the C-6 proR hydrogen from 5-enolpyruvylshikimate-3-phosphate (EPSP) to yield chorismate, which is the branch point compound that serves as the starting substrate for the three terminal pathways of aromatic amino acid biosynthesis. This reaction introduces a second double bond into the aromatic ring system. The chain is Chorismate synthase from Oceanobacillus iheyensis (strain DSM 14371 / CIP 107618 / JCM 11309 / KCTC 3954 / HTE831).